A 102-amino-acid polypeptide reads, in one-letter code: Large ribosomal subunit protein bL21 (102 aa).

This sequence belongs to the bacterial ribosomal protein bL21 family. In terms of assembly, part of the 50S ribosomal subunit. Contacts protein L20.

In terms of biological role, this protein binds to 23S rRNA in the presence of protein L20. The chain is Large ribosomal subunit protein bL21 from Geobacillus sp. (strain WCH70).